Consider the following 595-residue polypeptide: Beta-(1--&gt;2)glucan export ATP-binding/permease protein NdvA (595 aa).

The region spanning 21–301 is the ABC transmembrane type-1 domain; sequence SLLICSANVM…MSNFINLTIS (281 aa). Transmembrane regions (helical) follow at residues 22-42, 55-75, 129-149, 152-172, and 248-268; these read LLIC…PILF, IIPT…AYVL, IWLD…VLIP, FNMN…YVLI, and MAST…VAKG. The region spanning 335–569 is the ABC transporter domain; the sequence is IQFHHVTYKF…GGRFYKLLKA (235 aa). ATP is bound at residue 368 to 375; it reads GPTGAGKT.

The protein belongs to the ABC transporter superfamily. Beta-(1--&gt;2)glucan exporter (TC 3.A.1.108.1) family. As to quaternary structure, homodimer.

It is found in the cell inner membrane. It carries out the reaction [(1-&gt;2)-beta-D-glucosyl](n)(in) + ATP + H2O = [(1-&gt;2)-beta-D-glucosyl](n)(out) + ADP + phosphate + H(+). Functionally, involved in beta-(1--&gt;2)glucan export. Transmembrane domains (TMD) form a pore in the inner membrane and the ATP-binding domain (NBD) is responsible for energy generation. This chain is Beta-(1--&gt;2)glucan export ATP-binding/permease protein NdvA, found in Bartonella henselae (strain ATCC 49882 / DSM 28221 / CCUG 30454 / Houston 1) (Rochalimaea henselae).